The chain runs to 502 residues: ATP synthase subunit alpha (502 aa).

169–176 (GDRQTGKT) contacts ATP.

This sequence belongs to the ATPase alpha/beta chains family. As to quaternary structure, F-type ATPases have 2 components, CF(1) - the catalytic core - and CF(0) - the membrane proton channel. CF(1) has five subunits: alpha(3), beta(3), gamma(1), delta(1), epsilon(1). CF(0) has three main subunits: a(1), b(2) and c(9-12). The alpha and beta chains form an alternating ring which encloses part of the gamma chain. CF(1) is attached to CF(0) by a central stalk formed by the gamma and epsilon chains, while a peripheral stalk is formed by the delta and b chains.

It is found in the cell membrane. It catalyses the reaction ATP + H2O + 4 H(+)(in) = ADP + phosphate + 5 H(+)(out). In terms of biological role, produces ATP from ADP in the presence of a proton gradient across the membrane. The alpha chain is a regulatory subunit. In Bacillus pumilus (strain SAFR-032), this protein is ATP synthase subunit alpha.